The primary structure comprises 353 residues: Photosystem II protein D1 (353 aa).

Thr2 is modified (N-acetylthreonine). Residue Thr2 is modified to Phosphothreonine. Helical transmembrane passes span 29–46, 118–133, and 142–156; these read YIGWFGVLMIPTLLTATS, HFLLGVACYMGREWEL, and WIAIAYSAPVAAATA. Chlorophyll a is bound at residue His118. Tyr126 is a binding site for pheophytin a. [CaMn4O5] cluster is bound by residues Asp170 and Glu189. A helical membrane pass occupies residues 197 to 218; it reads FHMLGVAGVFGGSLFSAMHGSL. Residue His198 coordinates chlorophyll a. Residues His215 and 264–265 each bind a quinone; that span reads SF. His215 provides a ligand contact to Fe cation. His272 is a binding site for Fe cation. Residues 274-288 traverse the membrane as a helical segment; it reads FLAAWPVIGIWFTAL. Residues His332, Glu333, Asp342, and Ala344 each coordinate [CaMn4O5] cluster. The propeptide occupies 345–353; the sequence is TFEVSATNA.

Belongs to the reaction center PufL/M/PsbA/D family. In terms of assembly, PSII is composed of 1 copy each of membrane proteins PsbA, PsbB, PsbC, PsbD, PsbE, PsbF, PsbH, PsbI, PsbJ, PsbK, PsbL, PsbM, PsbT, PsbX, PsbY, PsbZ, Psb30/Ycf12, at least 3 peripheral proteins of the oxygen-evolving complex and a large number of cofactors. It forms dimeric complexes. The cofactor is The D1/D2 heterodimer binds P680, chlorophylls that are the primary electron donor of PSII, and subsequent electron acceptors. It shares a non-heme iron and each subunit binds pheophytin, quinone, additional chlorophylls, carotenoids and lipids. D1 provides most of the ligands for the Mn4-Ca-O5 cluster of the oxygen-evolving complex (OEC). There is also a Cl(-1) ion associated with D1 and D2, which is required for oxygen evolution. The PSII complex binds additional chlorophylls, carotenoids and specific lipids.. Tyr-161 forms a radical intermediate that is referred to as redox-active TyrZ, YZ or Y-Z. Post-translationally, C-terminally processed by CTPA; processing is essential to allow assembly of the oxygen-evolving complex and thus photosynthetic growth.

Its subcellular location is the plastid membrane. It catalyses the reaction 2 a plastoquinone + 4 hnu + 2 H2O = 2 a plastoquinol + O2. Photosystem II (PSII) is a light-driven water:plastoquinone oxidoreductase that uses light energy to abstract electrons from H(2)O, generating O(2) and a proton gradient subsequently used for ATP formation. It consists of a core antenna complex that captures photons, and an electron transfer chain that converts photonic excitation into a charge separation. The D1/D2 (PsbA/PsbD) reaction center heterodimer binds P680, the primary electron donor of PSII as well as several subsequent electron acceptors. The chain is Photosystem II protein D1 from Cuscuta gronovii (Common dodder).